Here is a 268-residue protein sequence, read N- to C-terminus: Phosphatidylglycerol--prolipoprotein diacylglyceryl transferase (268 aa).

4 consecutive transmembrane segments (helical) span residues 14–34, 57–77, 90–110, and 117–137; these read LGPI…FAGW, LTFY…IIFY, FFLW…LIAF, and IGAN…IGLG. R140 is a binding site for a 1,2-diacyl-sn-glycero-3-phospho-(1'-sn-glycerol). Transmembrane regions (helical) follow at residues 174-194, 200-220, and 238-258; these read QLFE…LVTI, YLVL…CEFF, and GQIL…AVFI.

This sequence belongs to the Lgt family.

It localises to the cell inner membrane. It carries out the reaction L-cysteinyl-[prolipoprotein] + a 1,2-diacyl-sn-glycero-3-phospho-(1'-sn-glycerol) = an S-1,2-diacyl-sn-glyceryl-L-cysteinyl-[prolipoprotein] + sn-glycerol 1-phosphate + H(+). It participates in protein modification; lipoprotein biosynthesis (diacylglyceryl transfer). Catalyzes the transfer of the diacylglyceryl group from phosphatidylglycerol to the sulfhydryl group of the N-terminal cysteine of a prolipoprotein, the first step in the formation of mature lipoproteins. This Francisella tularensis subsp. holarctica (strain FTNF002-00 / FTA) protein is Phosphatidylglycerol--prolipoprotein diacylglyceryl transferase.